The chain runs to 98 residues: MTSINLNLMTAFLLALAGVLMYRSHLMSTLLCLEGMMLSLYIMLSLLISHFHMFSLSMAPLILLVISACEAAGGLALLVKMSNNYGNDYVQNLNLLQC.

The next 3 helical transmembrane spans lie at 1–21 (MTSINLNLMTAFLLALAGVLM), 28–48 (STLLCLEGMMLSLYIMLSLLI), and 59–79 (APLILLVISACEAAGGLALLV).

The protein belongs to the complex I subunit 4L family. Core subunit of respiratory chain NADH dehydrogenase (Complex I) which is composed of 45 different subunits.

The protein localises to the mitochondrion inner membrane. The catalysed reaction is a ubiquinone + NADH + 5 H(+)(in) = a ubiquinol + NAD(+) + 4 H(+)(out). Functionally, core subunit of the mitochondrial membrane respiratory chain NADH dehydrogenase (Complex I) which catalyzes electron transfer from NADH through the respiratory chain, using ubiquinone as an electron acceptor. Part of the enzyme membrane arm which is embedded in the lipid bilayer and involved in proton translocation. This Phascolarctos cinereus (Koala) protein is NADH-ubiquinone oxidoreductase chain 4L (MT-ND4L).